The sequence spans 59 residues: DNA gyrase inhibitor YacG (59 aa).

Cys-7, Cys-10, Cys-25, and Cys-29 together coordinate Zn(2+).

It belongs to the DNA gyrase inhibitor YacG family. As to quaternary structure, interacts with GyrB. It depends on Zn(2+) as a cofactor.

Inhibits all the catalytic activities of DNA gyrase by preventing its interaction with DNA. Acts by binding directly to the C-terminal domain of GyrB, which probably disrupts DNA binding by the gyrase. The protein is DNA gyrase inhibitor YacG of Geobacter sulfurreducens (strain ATCC 51573 / DSM 12127 / PCA).